Reading from the N-terminus, the 552-residue chain is MWNETWNEITNELIQLSREPESEIPRITAEQRAYLKLVRPAAFVEGIAVLRVPHSRAKETIETHLGQAITSVLSRRMGRPFTVAVTVDPTLDVIQDLPHDVPEQHIVQHHVPEHPHYSPVSQGYPPHYAPEQSEYNTEYSDEYPSGWATYHVQTPQPSQSSQSAQQQPAQRMPDRRRYAEQQQVPQRSEEPVMGQRRAREKPAHDPDRNGSLNPRYTFDTYVVSDSNKLPWSAAWAVAEKPARAYNPLFIWGDSGLGKTHLMHAIGNYAQELDPKLKVKYVSSEEFTNDYINSVRDDRQEAFKRRYRDLDILMVDDIQFLQGKEGTQEEFFHTFNALQQADKQIVLSSDRPPKQLTTLEDRLRTRFQSGLIADIYPPDLETRIAILLNKASAEGITADRDVLELIASRFNASIRELEGAFIRVSAYASLNEAPINMATAQEALRDMMPEQADIEITAGMIMSVTAEYFHIDVDTLKGSGKSRSVAHPRQLAMYLCRELTDLSLPKIGEHFGGKDHTTVMYAYRKIGKEITEKRDTYDEIQQLTQQIKSSDRA.

Residues 1–90 (MWNETWNEIT…FTVAVTVDPT (90 aa)) are domain I, interacts with DnaA modulators. The segment at 90-210 (TLDVIQDLPH…KPAHDPDRNG (121 aa)) is domain II. Residues 113–213 (EHPHYSPVSQ…HDPDRNGSLN (101 aa)) are disordered. The segment covering 155-170 (PQPSQSSQSAQQQPAQ) has biased composition (low complexity). Residues 211–427 (SLNPRYTFDT…GAFIRVSAYA (217 aa)) form a domain III, AAA+ region region. Residues Gly-255, Gly-257, Lys-258, and Thr-259 each contribute to the ATP site. Positions 428–552 (SLNEAPINMA…TQQIKSSDRA (125 aa)) are domain IV, binds dsDNA.

It belongs to the DnaA family. In terms of assembly, oligomerizes as a right-handed, spiral filament on DNA at oriC.

It localises to the cytoplasm. In terms of biological role, plays an essential role in the initiation and regulation of chromosomal replication. ATP-DnaA binds to the origin of replication (oriC) to initiate formation of the DNA replication initiation complex once per cell cycle. Binds the DnaA box (a 9 base pair repeat at the origin) and separates the double-stranded (ds)DNA. Forms a right-handed helical filament on oriC DNA; dsDNA binds to the exterior of the filament while single-stranded (ss)DNA is stabiized in the filament's interior. The ATP-DnaA-oriC complex binds and stabilizes one strand of the AT-rich DNA unwinding element (DUE), permitting loading of DNA polymerase. After initiation quickly degrades to an ADP-DnaA complex that is not apt for DNA replication. Binds acidic phospholipids. The polypeptide is Chromosomal replication initiator protein DnaA (Corynebacterium diphtheriae (strain ATCC 700971 / NCTC 13129 / Biotype gravis)).